A 308-amino-acid polypeptide reads, in one-letter code: Mycothiol acetyltransferase (308 aa).

Residues 1 to 20 form a disordered region; that stretch reads MTSDDTAQPSGARRIETRPD. 2 N-acetyltransferase domains span residues 15–152 and 165–308; these read IETR…RSLT and VTVR…RSET. 1D-myo-inositol 2-(L-cysteinylamino)-2-deoxy-alpha-D-glucopyranoside is bound at residue glutamate 47. 91 to 93 provides a ligand contact to acetyl-CoA; it reads LVV. The 1D-myo-inositol 2-(L-cysteinylamino)-2-deoxy-alpha-D-glucopyranoside site is built by glutamate 192, lysine 231, and glutamate 240. Residues 244–246 and 251–257 contribute to the acetyl-CoA site; these read VGV and QGGGLGK. Tyrosine 278 is a binding site for 1D-myo-inositol 2-(L-cysteinylamino)-2-deoxy-alpha-D-glucopyranoside.

This sequence belongs to the acetyltransferase family. MshD subfamily. As to quaternary structure, monomer.

It catalyses the reaction 1D-myo-inositol 2-(L-cysteinylamino)-2-deoxy-alpha-D-glucopyranoside + acetyl-CoA = mycothiol + CoA + H(+). Functionally, catalyzes the transfer of acetyl from acetyl-CoA to desacetylmycothiol (Cys-GlcN-Ins) to form mycothiol. The protein is Mycothiol acetyltransferase of Streptomyces scabiei (strain 87.22).